The sequence spans 512 residues: Alpha-amylase (512 aa).

Positions 1–15 (MKLFVLIALFGLGFA) are cleaved as a signal peptide. 3 disulfides stabilise this stretch: Cys-43–Cys-101, Cys-85–Cys-130, and Cys-156–Cys-175. Positions 115, 173, and 182 each coordinate Ca(2+). Arg-210 is a chloride binding site. The Nucleophile role is filled by Asp-212. His-216 is a binding site for Ca(2+). Glu-248 acts as the Proton donor in catalysis. Arg-352 is a chloride binding site. 2 cysteine pairs are disulfide-bonded: Cys-394–Cys-400 and Cys-466–Cys-478. Asn-496 is a glycosylation site (N-linked (GlcNAc...) asparagine).

The protein belongs to the glycosyl hydrolase 13 family. Requires Ca(2+) as cofactor. Chloride serves as cofactor.

It is found in the secreted. The catalysed reaction is Endohydrolysis of (1-&gt;4)-alpha-D-glucosidic linkages in polysaccharides containing three or more (1-&gt;4)-alpha-linked D-glucose units.. Catalyzes the hydrolysis of alpha-1,4 glycosidic linkages in starch, glycogen and similar oligosaccharides. This is Alpha-amylase from Oryzias latipes (Japanese rice fish).